Consider the following 262-residue polypeptide: Putative outer membrane protein CPn_1034/CP_0818/CPj1034/CpB1074 (262 aa).

An N-terminal signal peptide occupies residues 1-17 (MKTWLFFTFLFSCSSFY).

Its subcellular location is the cell outer membrane. This chain is Putative outer membrane protein CPn_1034/CP_0818/CPj1034/CpB1074, found in Chlamydia pneumoniae (Chlamydophila pneumoniae).